Consider the following 167-residue polypeptide: HTH-type transcriptional repressor IacR (167 aa).

The segment covering 1–10 (MSNAKNTSAA) has biased composition (polar residues). The interval 1 to 25 (MSNAKNTSAASPARKGHSHHDPASD) is disordered. The region spanning 30–162 (EDFPFYWLAR…LNRMLEVVFH (133 aa)) is the HTH marR-type domain. Residues 76 to 99 (ISEISTHAIAKLSTITKIVYRMKE) constitute a DNA-binding region (H-T-H motif).

With respect to regulation, exposure to indole-3-acetic acid (IAA) probably relieves the repressor activity. In terms of biological role, probably acts as a repressor of iacA expression. In Pseudomonas putida (Arthrobacter siderocapsulatus), this protein is HTH-type transcriptional repressor IacR.